Consider the following 319-residue polypeptide: Aspartate carbamoyltransferase catalytic subunit (319 aa).

Carbamoyl phosphate-binding residues include arginine 65 and threonine 66. Residue lysine 93 participates in L-aspartate binding. The carbamoyl phosphate site is built by arginine 115, histidine 143, and glutamine 146. Positions 176 and 230 each coordinate L-aspartate. Carbamoyl phosphate contacts are provided by glycine 271 and proline 272.

It belongs to the aspartate/ornithine carbamoyltransferase superfamily. ATCase family. As to quaternary structure, heterododecamer (2C3:3R2) of six catalytic PyrB chains organized as two trimers (C3), and six regulatory PyrI chains organized as three dimers (R2).

The catalysed reaction is carbamoyl phosphate + L-aspartate = N-carbamoyl-L-aspartate + phosphate + H(+). The protein operates within pyrimidine metabolism; UMP biosynthesis via de novo pathway; (S)-dihydroorotate from bicarbonate: step 2/3. In terms of biological role, catalyzes the condensation of carbamoyl phosphate and aspartate to form carbamoyl aspartate and inorganic phosphate, the committed step in the de novo pyrimidine nucleotide biosynthesis pathway. The chain is Aspartate carbamoyltransferase catalytic subunit from Chelativorans sp. (strain BNC1).